The chain runs to 131 residues: Large ribosomal subunit protein eL32 (131 aa).

It belongs to the eukaryotic ribosomal protein eL32 family.

The protein is Large ribosomal subunit protein eL32 (RPL32) of Eremothecium gossypii (strain ATCC 10895 / CBS 109.51 / FGSC 9923 / NRRL Y-1056) (Yeast).